The chain runs to 101 residues: Growth-regulated alpha protein (101 aa).

The signal sequence occupies residues 1–28 (MAPATRSLLRAPLLLLLLLLATSRLATG). Disulfide bonds link cysteine 37–cysteine 63 and cysteine 39–cysteine 79.

It belongs to the intercrine alpha (chemokine CxC) family.

The protein resides in the secreted. Functionally, has chemotactic activity for neutrophils. The sequence is that of Growth-regulated alpha protein (CXCL1) from Cricetulus griseus (Chinese hamster).